Consider the following 490-residue polypeptide: Betaine aldehyde dehydrogenase (490 aa).

K(+) is bound by residues T26, I27, and D93. 150–152 (GAW) serves as a coordination point for NAD(+). The Charge relay system role is filled by K162. 176–179 (KPSE) is an NAD(+) binding site. V180 serves as a coordination point for K(+). Residue 230–233 (GVAS) coordinates NAD(+). L246 contacts K(+). The active-site Proton acceptor is E252. 3 residues coordinate NAD(+): G254, C286, and E387. C286 (nucleophile) is an active-site residue. C286 is subject to Cysteine sulfenic acid (-SOH). Residues K457 and G460 each contribute to the K(+) site. E464 (charge relay system) is an active-site residue.

The protein belongs to the aldehyde dehydrogenase family. In terms of assembly, dimer of dimers. K(+) serves as cofactor.

The catalysed reaction is betaine aldehyde + NAD(+) + H2O = glycine betaine + NADH + 2 H(+). The protein operates within amine and polyamine biosynthesis; betaine biosynthesis via choline pathway; betaine from betaine aldehyde: step 1/1. In terms of biological role, involved in the biosynthesis of the osmoprotectant glycine betaine. Catalyzes the irreversible oxidation of betaine aldehyde to the corresponding acid. The sequence is that of Betaine aldehyde dehydrogenase from Escherichia coli (strain ATCC 8739 / DSM 1576 / NBRC 3972 / NCIMB 8545 / WDCM 00012 / Crooks).